A 129-amino-acid polypeptide reads, in one-letter code: Glycine cleavage system H protein (129 aa).

The region spanning 24-106 (LVRVGISAFA…HGEGWLLVVR (83 aa)) is the Lipoyl-binding domain. K65 bears the N6-lipoyllysine mark.

Belongs to the GcvH family. In terms of assembly, the glycine cleavage system is composed of four proteins: P, T, L and H. (R)-lipoate is required as a cofactor.

Its function is as follows. The glycine cleavage system catalyzes the degradation of glycine. The H protein shuttles the methylamine group of glycine from the P protein to the T protein. The polypeptide is Glycine cleavage system H protein (Prochlorococcus marinus (strain MIT 9303)).